Consider the following 862-residue polypeptide: Short transient receptor potential channel 7 (862 aa).

Residues 1–21 (MLRNSTFKNMQRRHTTLREKG) form a disordered region. The Cytoplasmic segment spans residues 1-351 (MLRNSTFKNM…GLRQQSIAVK (351 aa)). Basic residues predominate over residues 10 to 21 (MQRRHTTLREKG). At Thr-15 the chain carries Phosphothreonine; by PKG/PRKG1. ANK repeat units lie at residues 42–71 (PEEE…TLNF), 77–106 (MGQN…LARV), 108–134 (DALL…FAQG), and 163–192 (HDIT…RIER). Residues 352–372 (FLAVFGVSIGLPFLAIAYWIA) traverse the membrane as a helical segment. Residues 373-383 (PCSKLGRTLRS) lie on the Extracellular side of the membrane. A helical transmembrane segment spans residues 384-404 (PFMKFVAHAVSFTIFLGLLVV). Topologically, residues 405-465 (NASDRFEGVK…KEIWEEGPRE (61 aa)) are cytoplasmic. The helical transmembrane segment at 466–486 (YVLHLWNLLDFGMLSIFVASF) threads the bilayer. Over 487–537 (TARFMAFLKATEAQLYVDQHVQDDTLHNVSLPPEVAYFTYARDKWWPSDPQ) the chain is Extracellular. The N-linked (GlcNAc...) asparagine glycan is linked to Asn-514. Residues 538-558 (IISEGLYAIAVVLSFSRIAYI) traverse the membrane as a helical segment. The Cytoplasmic segment spans residues 559–581 (LPANESFGPLQISLGRTVKDIFK). Residues 582-602 (FMVIFIMVFVAFMIGMFNLYS) traverse the membrane as a helical segment. Over 603-651 (YYRGAKYNPAFTTVEESFKTLFWSIFGLSEVISVVLKYDHKFIENIGYV) the chain is Extracellular. The helical transmembrane segment at 652-672 (LYGVYNVTMVVVLLNMLIAMI) threads the bilayer. The Cytoplasmic segment spans residues 673-862 (NNSYQEIEED…HLRVNKGKDI (190 aa)).

It belongs to the transient receptor (TC 1.A.4) family. STrpC subfamily. TRPC7 sub-subfamily. As to quaternary structure, interacts with MX1 and RNF24. Interacts (via ANK-repeat domains) with PRKG1. In terms of processing, phosphorylation by PRKG1 at Thr-15 negatively regulates TRPC7 activity.

The protein localises to the cell membrane. Its subcellular location is the nucleus envelope. It carries out the reaction Ca(2+)(in) = Ca(2+)(out). Forms a receptor-activated non-selective calcium permeant cation channel. Probably is operated by a phosphatidylinositol second messenger system activated by receptor tyrosine kinases or G-protein coupled receptors. Activated by diacylglycerol (DAG). May also be activated by intracellular calcium store depletion. This Homo sapiens (Human) protein is Short transient receptor potential channel 7 (TRPC7).